Reading from the N-terminus, the 598-residue chain is Elongation factor 4 (598 aa).

The 183-residue stretch at 2–184 folds into the tr-type G domain; the sequence is QHIRNFSIIA…AIVARVPAPK (183 aa). Residues 14–19 and 131–134 each bind GTP; these read DHGKST and NKID.

Belongs to the TRAFAC class translation factor GTPase superfamily. Classic translation factor GTPase family. LepA subfamily.

It is found in the cell inner membrane. It carries out the reaction GTP + H2O = GDP + phosphate + H(+). Required for accurate and efficient protein synthesis under certain stress conditions. May act as a fidelity factor of the translation reaction, by catalyzing a one-codon backward translocation of tRNAs on improperly translocated ribosomes. Back-translocation proceeds from a post-translocation (POST) complex to a pre-translocation (PRE) complex, thus giving elongation factor G a second chance to translocate the tRNAs correctly. Binds to ribosomes in a GTP-dependent manner. This chain is Elongation factor 4, found in Azoarcus sp. (strain BH72).